A 194-amino-acid polypeptide reads, in one-letter code: MNRKVGLFFGTFNPIHTGHLIIANHMAEYSDLEEIWLVVTPHNPHKKKSSLLDNHHRLEMVYRACEGYGKLKPSNIEFDLPQPNYTVNTLAHIQEKFPTNDFCLIMGEDNLKSFHKWKNSEVIIENHEIYVYPRIAPGKVADEFKTHAKITRVAAPIIEISSTFIRKSIKESKNIGPLLDEKVWKYIDEMNFYK.

The protein belongs to the NadD family.

It carries out the reaction nicotinate beta-D-ribonucleotide + ATP + H(+) = deamido-NAD(+) + diphosphate. Its pathway is cofactor biosynthesis; NAD(+) biosynthesis; deamido-NAD(+) from nicotinate D-ribonucleotide: step 1/1. In terms of biological role, catalyzes the reversible adenylation of nicotinate mononucleotide (NaMN) to nicotinic acid adenine dinucleotide (NaAD). The polypeptide is Probable nicotinate-nucleotide adenylyltransferase (Christiangramia forsetii (strain DSM 17595 / CGMCC 1.15422 / KT0803) (Gramella forsetii)).